A 60-amino-acid polypeptide reads, in one-letter code: MSEKTVKVQLVKSLIGTRESHRATVRGLGLRRLNSVSELQDTPAVRGMINKVSYLVKVIA.

This sequence belongs to the universal ribosomal protein uL30 family. In terms of assembly, part of the 50S ribosomal subunit.

This is Large ribosomal subunit protein uL30 from Burkholderia ambifaria (strain MC40-6).